A 92-amino-acid chain; its full sequence is Small ribosomal subunit protein uS19 (92 aa).

This sequence belongs to the universal ribosomal protein uS19 family. As to quaternary structure, part of the 30S ribosomal subunit.

Functionally, protein S19 forms a complex with S13 that binds strongly to the 16S ribosomal RNA. The polypeptide is Small ribosomal subunit protein uS19 (rpsS) (Bacillus subtilis (strain 168)).